A 203-amino-acid polypeptide reads, in one-letter code: Alpha-amylase/subtilisin inhibitor (203 aa).

The segment covering 1 to 12 (MGSRRAGSSSSP) has biased composition (polar residues). An N-terminal signal peptide occupies residues 1–22 (MGSRRAGSSSSPLFWPAPPSRA). The interval 1 to 34 (MGSRRAGSSSSPLFWPAPPSRAADPPPVHDTDGH) is disordered. The span at 15 to 26 (WPAPPSRAADPP) shows a compositional bias: pro residues. 2 disulfide bridges follow: Cys-65–Cys-112 and Cys-166–Cys-170.

The protein belongs to the protease inhibitor I3 (leguminous Kunitz-type inhibitor) family.

Functionally, this protein inhibits independently subtilisin and alpha-amylase. The sequence is that of Alpha-amylase/subtilisin inhibitor from Hordeum vulgare (Barley).